The primary structure comprises 202 residues: MNKQITKELLEIGAVQINLDTYFTWTSGLKSPIYCDNRLTMSYPKVRKNIARAFILMLEQDGFKPDVIAGCATAGISHAAWLSDLLGLPMVYVRSKPKGHGKGNQIEGASVEGKTVLVIEDLISTGGSSIEAAKALQQAGANILAVYSIFTYGLDKSKDAFLQANIAYNSITGFDELIQELIGSGELSEEEKNELLTFRESL.

5-phospho-alpha-D-ribose 1-diphosphate contacts are provided by residues R94, K98, H100, and 120–128 (EDLISTGGS). S124 lines the orotate pocket.

It belongs to the purine/pyrimidine phosphoribosyltransferase family. PyrE subfamily. Homodimer. The cofactor is Mg(2+).

The enzyme catalyses orotidine 5'-phosphate + diphosphate = orotate + 5-phospho-alpha-D-ribose 1-diphosphate. It participates in pyrimidine metabolism; UMP biosynthesis via de novo pathway; UMP from orotate: step 1/2. Functionally, catalyzes the transfer of a ribosyl phosphate group from 5-phosphoribose 1-diphosphate to orotate, leading to the formation of orotidine monophosphate (OMP). This chain is Orotate phosphoribosyltransferase, found in Oceanobacillus iheyensis (strain DSM 14371 / CIP 107618 / JCM 11309 / KCTC 3954 / HTE831).